The sequence spans 314 residues: MIEIEKPRIETIEISEDAKFGKFVVEPLERGYGTTLGNSLRRILLSSLSGAAVKYIEIEGVLHEFSAVDNVVEDVSTIIMNIKQLALKIYSEEDKTLEIDVRDEGEVTASDITHDSDVEILNPELKIATVSKGGHLKIRLVANKGRGYALAEQNNTSDLPIGVIPVDSLYSPVERVNYTVENTRVGQSSDFDKLTLDVWTNGSITPQESVSLAAKIMTEHLNIFVGLTDEAQNAEIMIEKEEDQKEKVLEMSIEELDLSVRSYNCLKRAGINSVQELADKSEADMMKVRNLGRKSLEEVKYKLEDLGLGLRKED.

Residues 1–228 (MIEIEKPRIE…EHLNIFVGLT (228 aa)) are alpha N-terminal domain (alpha-NTD). The interval 245–314 (KEKVLEMSIE…DLGLGLRKED (70 aa)) is alpha C-terminal domain (alpha-CTD).

The protein belongs to the RNA polymerase alpha chain family. As to quaternary structure, homodimer. The RNAP catalytic core consists of 2 alpha, 1 beta, 1 beta' and 1 omega subunit. When a sigma factor is associated with the core the holoenzyme is formed, which can initiate transcription.

The enzyme catalyses RNA(n) + a ribonucleoside 5'-triphosphate = RNA(n+1) + diphosphate. Its function is as follows. DNA-dependent RNA polymerase catalyzes the transcription of DNA into RNA using the four ribonucleoside triphosphates as substrates. The chain is DNA-directed RNA polymerase subunit alpha from Staphylococcus aureus (strain bovine RF122 / ET3-1).